Consider the following 337-residue polypeptide: Ribonucleoside-diphosphate reductase small chain (337 aa).

The Fe cation site is built by Asp85, Glu116, and His119. The active site involves Tyr123. Residues Glu178, Glu212, and His215 each coordinate Fe cation.

It belongs to the ribonucleoside diphosphate reductase small chain family. Heterodimer of a large and a small subunit. It depends on Fe cation as a cofactor.

The catalysed reaction is a 2'-deoxyribonucleoside 5'-diphosphate + [thioredoxin]-disulfide + H2O = a ribonucleoside 5'-diphosphate + [thioredoxin]-dithiol. In terms of biological role, provides the precursors necessary for DNA synthesis. Catalyzes the biosynthesis of deoxyribonucleotides from the corresponding ribonucleotides. The chain is Ribonucleoside-diphosphate reductase small chain (RNR2) from Trypanosoma brucei brucei.